The chain runs to 449 residues: Tryptophan--tRNA ligase (449 aa).

Residues 10-12 and 18-19 each bind ATP; these read TTT and GN. Residues 11–19 carry the 'HIGH' region motif; it reads TTGTPHLGN. Residue aspartate 143 participates in L-tryptophan binding. ATP is bound by residues 155-157, leucine 197, and 204-208; these read GRD and KMSKS. Positions 204 to 208 match the 'KMSKS' region motif; it reads KMSKS.

The protein belongs to the class-I aminoacyl-tRNA synthetase family. Homodimer.

The protein resides in the cytoplasm. The catalysed reaction is tRNA(Trp) + L-tryptophan + ATP = L-tryptophyl-tRNA(Trp) + AMP + diphosphate + H(+). In terms of biological role, catalyzes the attachment of tryptophan to tRNA(Trp). In Pseudomonas putida (strain ATCC 47054 / DSM 6125 / CFBP 8728 / NCIMB 11950 / KT2440), this protein is Tryptophan--tRNA ligase.